The chain runs to 917 residues: MAFIRKKQQEQQLQLYSKERFSLLLLNLEEYYFEQHRANHILHKGSHHERKIRGSLKICSKSVIFEPDSISQPIIKIPLRDCIKIGKHGENGANRHFTKAKSGGISLIFSQVYFIKEHNVVAPYKIERGKMEYVFELDVPGKVEDVVETLLQLHRASCLDKLGDQTAMITAILQSRLARTSFDKNRFQNISEKLHMECKAEMVTPLVTNPGHVCITDTNLYFQPLNGYPKPVVQITLQDVRRIYKRRHGLMPLGLEVFCTEDDLCSDIYLKFYEPQDRDDLYFYIATYLEHHVAEHTAESYMLQWQRGHLSNYQYLLHLNNLADRSCNDLSQYPVFPWIIHDYSSSELDLSNPGTFRDLSKPVGALNKERLERLLTRYQEMPEPKFMYGSHYSSPGYVLFYLVRIAPEYMLCLQNGRFDNADRMFNSIAETWKNCLDGATDFKELIPEFYGDDVSFLVNSLKLDLGKRQGGQMVDDVELPPWASSPEDFLQKSKDALESNYVSEHLHEWIDLIFGYKQKGSDAVGAHNVFHPLTYEGGVDLNSIQDPDEKVAMLTQILEFGQTPKQLFVTPHPRRITPKFKSLSQTSSYNASMADSPGEESFEDLTEESKTLAWNNITKLQLHEHYKIHKEAVTGITVSRNGSSVFTTSQDSTLKMFSKESKMLQRSISFSNMALSSCLLLPGDATVITSSWDNNVYFYSIAFGRRQDTLMGHDDAVSKICWHDNRLYSASWDSTVKVWSGVPAEMPGTKRHHFDLLAELEHDVSVDTISLNAASTLLVSGTKEGTVNIWDLTTATLMHQIPCHSGIVCDTAFSPDSRHVLSTGTDGCLNVIDVQTGMLISSMTSDEPQRCFVWDGNSVLSGSQSGELLVWDLLGAKISERIQGHTGAVTCIWMNEQCSSIITGGEDRQIIFWKLQY.

A GRAM domain is found at 176-247; the sequence is RLARTSFDKN…QDVRRIYKRR (72 aa). Residues 189-286 enclose the BEACH-type PH domain; that stretch reads NISEKLHMEC…DRDDLYFYIA (98 aa). Residues 290 to 575 enclose the BEACH domain; the sequence is EHHVAEHTAE…QLFVTPHPRR (286 aa). 6 WD repeats span residues 628–658, 670–700, 712–740, 761–791, 803–833, and 884–914; these read IHKE…KMFS, FSNM…YFYS, GHDD…KVWS, EHDV…NIWD, CHSG…NVID, and GHTG…IFWK.

As to expression, ubiquitous.

Functionally, couples the p55 TNF-receptor (TNF-R55 / TNFR1) to neutral sphingomyelinase (N-SMASE). Specifically binds to the N-smase activation domain of TNF-R55. May regulate ceramide production by N-SMASE. The polypeptide is Protein FAN (NSMAF) (Homo sapiens (Human)).